The following is a 105-amino-acid chain: Probable tetrachloroethene reductive dehalogenase membrane anchor protein (105 aa).

3 helical membrane passes run 3–23 (IYDVLIWMALGMIALLIQYGI), 35–55 (IPLQICGFLANFFFIFALAWG), and 66–86 (AIGMGFIFFGGTALIPAIITY).

Belongs to the PceB family.

It is found in the cell membrane. In terms of biological role, may act as a membrane anchor for the tetrachloroethene reductive dehalogenase PceA. The sequence is that of Probable tetrachloroethene reductive dehalogenase membrane anchor protein from Desulfitobacterium hafniense (Desulfitobacterium frappieri).